The following is a 228-amino-acid chain: Ion-translocating oxidoreductase complex subunit G (228 aa).

Residues 35 to 55 traverse the membrane as a helical segment; it reads ALSLGLVCALVAVALLLGNQL. Residue T197 is modified to FMN phosphoryl threonine.

The protein belongs to the RnfG family. The complex is composed of six subunits: RnfA, RnfB, RnfC, RnfD, RnfE and RnfG. FMN is required as a cofactor.

The protein resides in the cell inner membrane. Part of a membrane-bound complex that couples electron transfer with translocation of ions across the membrane. The chain is Ion-translocating oxidoreductase complex subunit G from Stutzerimonas stutzeri (Pseudomonas stutzeri).